A 975-amino-acid polypeptide reads, in one-letter code: MQSFLPLLMGIMASASSVEWRHPVIWFNSKVVQSSEVVVKPGTSLELKCGGDGPVNWQTRLPKHKRYMSRSPGNLRTIRVARPTAEFTGTYKCFYSAWAQHRHLTSSVHVYVKDPNRVFWTSSTSLRVVRKEGEDYLLPCLLTDPEATDLGLRMDNGTTVPPEMNYTVYRHRGILIRSLQPSFNADYVCTAKVKGVEKTSKTFSINVIQKLRFPPYVFLEMDEYVRIVGEELQIRCMTHNPNFNYNVTWNYTTKSRVTIEERVRSSGENRLDIQSILTISAVDLADTGNISCIGTNEAGVNSSNTYLLVVEKPYIRLWPQLIPKLASQGLSVEVNEGEDLELGVMVEAYPQITDHRWHTPTSPSTSMQEHIYHARLQLKRMNAQEQGQYTFYAKSNLANGSISFHVKMYQKPIAVVRWENITTLTCTSFGYPAPQIIWYQCSGIRPTCNGNNTGLPKQNHPQALTVEVQREEYGAVEVESVFTVGLSNHRMTVECVAFNLVGVSSDTFTVEVSDKLFTSTLIGAAGVLAIFLLLLVFLLYKYKQKPRFEIRWKIIEAREGNNYTFIDPTQLPYNEKWEFPRDKLKLGKVLGAGAFGKVVEATAFGLGEDKDNTLRVAVKMLKANAHSDEREALMSELKILSHLGHHQNIVNLLGACTYGGPVLVITEYCSLGDLLNFLRQKAETFVNLVMNIPEIMENSNDYKNICNQKWYIRSDSGISSTSSSTYLEMRPSQQSHIEASGRKSLCEDNGDWPLDIDDLLRFSLQVAQGLDFLASRNCIHRDVAARNVLLTDKRVAKICDFGLARDIMNDSNYVVKGNARLPVKWMAPESIFDCVYTVQSDVWSYGILLWEIFSLGKSPYPSMAVDSRFYKMVKRGYQMSQPDFALPEIYMIMKMCWNLEPTERPTFSMISQMINRLLGGQDEQEKLIYRNVQPEQVAEGEACDEPKRYDPPCERSCDHEEEEEPLMKTNNYQFC.

An N-terminal signal peptide occupies residues 1–17 (MQSFLPLLMGIMASASS). At 18 to 519 (VEWRHPVIWF…VEVSDKLFTS (502 aa)) the chain is on the extracellular side. Ig-like C2-type domains follow at residues 34-113 (SSEV…VYVK), 125-208 (SLRV…INVI), 221-310 (MDEY…LLVV), 329-407 (GLSV…FHVK), and 404-513 (FHVK…VEVS). Intrachain disulfides connect Cys-49-Cys-93, Cys-140-Cys-189, and Cys-236-Cys-292. Asn-156, Asn-165, Asn-246, Asn-250, Asn-289, Asn-301, Asn-399, Asn-420, and Asn-451 each carry an N-linked (GlcNAc...) asparagine glycan. A disulfide bridge connects residues Cys-426 and Cys-495. A helical transmembrane segment spans residues 520–540 (TLIGAAGVLAIFLLLLVFLLY). At 541 to 975 (KYKQKPRFEI…LMKTNNYQFC (435 aa)) the chain is on the cytoplasmic side. The segment at 544–576 (QKPRFEIRWKIIEAREGNNYTFIDPTQLPYNEK) is regulatory juxtamembrane domain. Tyr-563 is modified (phosphotyrosine; by autocatalysis). The region spanning 584 to 918 (LKLGKVLGAG…MISQMINRLL (335 aa)) is the Protein kinase domain. ATP-binding positions include 590–598 (LGAGAFGKV) and Lys-619. A phosphotyrosine; by autocatalysis mark is found at Tyr-702 and Tyr-726. Asp-782 (proton acceptor) is an active-site residue. The tract at residues 800-822 (DFGLARDIMNDSNYVVKGNARLP) is activation loop. Tyr-813 and Tyr-929 each carry phosphotyrosine; by autocatalysis. Residues 939-963 (EGEACDEPKRYDPPCERSCDHEEEE) form a disordered region. Residues 944-958 (DEPKRYDPPCERSCD) show a composition bias toward basic and acidic residues. Tyr-972 carries the phosphotyrosine; by autocatalysis modification.

It belongs to the protein kinase superfamily. Tyr protein kinase family. CSF-1/PDGF receptor subfamily. In terms of assembly, monomer. Homodimer. Interacts with CSF1. In terms of processing, autophosphorylated in response to CSF1 binding. autophosphorylation, leading to its degradation. Post-translationally, ubiquitinated. Becomes rapidly polyubiquitinated after autophosphorylation, leading to its degradation.

Its subcellular location is the cell membrane. It carries out the reaction L-tyrosyl-[protein] + ATP = O-phospho-L-tyrosyl-[protein] + ADP + H(+). Its activity is regulated as follows. Present in an inactive conformation in the absence of bound ligand. CSF1 binding leads to dimerization and activation by autophosphorylation on tyrosine residues. In terms of biological role, tyrosine-protein kinase that acts as a cell-surface receptor for CSF1 and plays an essential role in the regulation of survival, proliferation and differentiation of hematopoietic precursor cells, especially mononuclear phagocytes, such as macrophages and monocytes. Plays an important role in innate immunity and in inflammatory processes. Plays an important role in the regulation of osteoclast proliferation and differentiation, the regulation of bone resorption, and is required for normal bone development. Promotes reorganization of the actin cytoskeleton, regulates formation of membrane ruffles, cell adhesion and cell migration. Activates several signaling pathways in response to ligand binding. In Takifugu rubripes (Japanese pufferfish), this protein is Macrophage colony-stimulating factor 1 receptor 1 (csf1r1).